Reading from the N-terminus, the 143-residue chain is Late embryogenesis abundant protein 1 (143 aa).

Residues 1–17 (MSSQQNQNRQGEQQEQG) are compositionally biased toward low complexity. The tract at residues 1–143 (MSSQQNQNRQ…QAGEKVKGRD (143 aa)) is disordered. 4 consecutive repeat copies span residues 47 to 57 (KTAEFRDSAGE), 69 to 79 (KGQEFKERAGE), 80 to 90 (KAEETKQRAGE), and 91 to 101 (KMDETKQRAGE). Composition is skewed to basic and acidic residues over residues 47–60 (KTAE…ETIR) and 69–143 (KGQE…KGRD). Residues 47–101 (KTAEFRDSAGETIRDLTGQAQEKGQEFKERAGEKAEETKQRAGEKMDETKQRAGE) form a 4 X 11 AA approximate repeats region.

This sequence belongs to the LEA type 4 family.

In terms of biological role, may be involved in defense against water stress. This is Late embryogenesis abundant protein 1 from Aphelenchoides avenae (Mycophagous nematode worm).